Reading from the N-terminus, the 860-residue chain is Ras GTPase-activating-like protein gapA (860 aa).

A compositionally biased stretch (acidic residues) spans M1–S20. The tract at residues M1–S48 is disordered. A compositionally biased stretch (low complexity) spans S21 to D46. Residues A146–N185 are a coiled coil. In terms of domain architecture, Ras-GAP spans F269–L515. The stretch at N663–H732 forms a coiled coil.

In terms of assembly, heterotetramer. Quaternary complex with activated rac1A, ctxA and ctxB in the absence of rgaA.

In terms of biological role, part of signaling pathway that is required for completion of cytokinesis. gapA and rgaA control cortexillin localization to the cleavage furrow and hence may be involved in cleavage of the midbody in the final stage of cytokinesis by regulating the actin cytoskeleton. Forms a complex by linking activated rac1A to ctxA in the absence of rgaA. Assembly of this complex is necessary for the recruitment of cortexillin to the midzone of the dividing cell. This chain is Ras GTPase-activating-like protein gapA (gapA), found in Dictyostelium discoideum (Social amoeba).